Here is a 433-residue protein sequence, read N- to C-terminus: DNA polymerase processivity factor (433 aa).

Residues 274 to 433 (RGDPFDKNYV…VPNTKKQKCG (160 aa)) are disordered. Composition is skewed to gly residues over residues 289-298 (SRGGGGGGGS), 325-336 (GLGGLGGGGGGG), and 344-359 (GGGG…GGGG). The segment covering 360 to 376 (GDHDHGLSSKEKYEQHK) has biased composition (basic and acidic residues). Residues 385–398 (GGSGGGGGGGGGGL) show a composition bias toward gly residues. Residue K410 forms a Glycyl lysine isopeptide (Lys-Gly) (interchain with G-Cter in host SUMO1) linkage. Phosphoserine occurs at positions 413, 415, and 418.

Belongs to the herpesviridae polymerase accessory protein family. In terms of assembly, forms homodimers. Interacts with host SMARCB1. Interacts with host NCL/nucleolin; this interaction is important for the organization of proteins within viral replication compartments. Interacts with UL112/UL113; this interaction is necessary for efficient viral DNA replication. Interacts with UL84. Interacts with the uracil DNA glycosylase UL114. Interacts with the DNA polymerase catalytic subunit UL54. Interacts with host IRF3. Interacts with host RELA. Phosphorylated by UL97 on serine residues, phosphorylation seems important for UL44 nuclear entry but does not directly affect its role in replication. In terms of processing, sumoylated. Sumoylation on Lys-410 increases viral DNA replication.

Its subcellular location is the virion. The protein resides in the host nucleus. Its function is as follows. Accessory subunit of the DNA polymerase that plays an essential role in viral DNA replication and acts by increasing the processivity of polymerization. Forms dimers that binds to double-stranded DNA and UL54 specifically to stimulates long chain DNA synthesis efficiently. Plays an important role in maintaining the structure of viral replication compartments by interacting with host nucleolin/NUC. In addition, suppresses innate immune responses through effects on host IRF3 and NF-kappa-B. Mechanistically, interfere with the binding of IRF3 and the p65 NF-kappa-B subunit to the promoters of antiviral genes, thereby inhibiting the expression of these genes. The sequence is that of DNA polymerase processivity factor (UL44) from Homo sapiens (Human).